The primary structure comprises 557 residues: Dihydroxy-acid dehydratase (557 aa).

Residue C50 participates in [2Fe-2S] cluster binding. D82 is a Mg(2+) binding site. C123 serves as a coordination point for [2Fe-2S] cluster. Mg(2+)-binding residues include D124 and K125. K125 carries the post-translational modification N6-carboxylysine. C195 is a binding site for [2Fe-2S] cluster. A Mg(2+)-binding site is contributed by E447. S473 (proton acceptor) is an active-site residue.

This sequence belongs to the IlvD/Edd family. In terms of assembly, homodimer. It depends on [2Fe-2S] cluster as a cofactor. The cofactor is Mg(2+).

It carries out the reaction (2R)-2,3-dihydroxy-3-methylbutanoate = 3-methyl-2-oxobutanoate + H2O. It catalyses the reaction (2R,3R)-2,3-dihydroxy-3-methylpentanoate = (S)-3-methyl-2-oxopentanoate + H2O. The protein operates within amino-acid biosynthesis; L-isoleucine biosynthesis; L-isoleucine from 2-oxobutanoate: step 3/4. It functions in the pathway amino-acid biosynthesis; L-valine biosynthesis; L-valine from pyruvate: step 3/4. In terms of biological role, functions in the biosynthesis of branched-chain amino acids. Catalyzes the dehydration of (2R,3R)-2,3-dihydroxy-3-methylpentanoate (2,3-dihydroxy-3-methylvalerate) into 2-oxo-3-methylpentanoate (2-oxo-3-methylvalerate) and of (2R)-2,3-dihydroxy-3-methylbutanoate (2,3-dihydroxyisovalerate) into 2-oxo-3-methylbutanoate (2-oxoisovalerate), the penultimate precursor to L-isoleucine and L-valine, respectively. The sequence is that of Dihydroxy-acid dehydratase from Burkholderia thailandensis (strain ATCC 700388 / DSM 13276 / CCUG 48851 / CIP 106301 / E264).